The following is a 146-amino-acid chain: uncharacterized protein (146 aa).

A helical membrane pass occupies residues 7-27; sequence FVLSITIVLVILIIIAYIWYN.

Belongs to the asfivirus E146L family.

The protein localises to the host membrane. The protein resides in the virion. This is an uncharacterized protein from Ornithodoros (relapsing fever ticks).